The primary structure comprises 417 residues: Hyaluronidase-3 (417 aa).

The signal sequence occupies residues 1-20; the sequence is MTTQLGPALVLGVALCLGCG. 5 disulfide bridges follow: C42-C331, C205-C220, C356-C367, C361-C395, and C397-C406. The N-linked (GlcNAc...) asparagine glycan is linked to N69. E129 acts as the Proton donor in catalysis. N215 carries N-linked (GlcNAc...) asparagine glycosylation. The EGF-like domain maps to 352–407; sequence AAMACSHQRCHGHGRCARRDPGQMEAFLHLWPDGSLGDWKSFSCHCYWGWAGPTCQ.

This sequence belongs to the glycosyl hydrolase 56 family. N-glycosylated. In terms of tissue distribution, expressed in sperm. Highly expressed in epidermis of the skin, where it is expressed intracellularily in the deep horny layer (at protein level). Bone marrow, testis and kidney.

It is found in the secreted. It localises to the cell membrane. The protein localises to the cytoplasmic vesicle. The protein resides in the secretory vesicle. Its subcellular location is the acrosome. It is found in the endoplasmic reticulum. It localises to the early endosome. The catalysed reaction is Random hydrolysis of (1-&gt;4)-linkages between N-acetyl-beta-D-glucosamine and D-glucuronate residues in hyaluronate.. Facilitates sperm penetration into the layer of cumulus cells surrounding the egg by digesting hyaluronic acid. Involved in induction of the acrosome reaction in the sperm. Involved in follicular atresia, the breakdown of immature ovarian follicles that are not selected to ovulate. Induces ovarian granulosa cell apoptosis, possibly via apoptotic signaling pathway involving CASP8 and CASP3 activation, and poly(ADP-ribose) polymerase (PARP) cleavage. Has no hyaluronidase activity in embryonic fibroblasts in vitro. Has no hyaluronidase activity in granulosa cells in vitro. The sequence is that of Hyaluronidase-3 (HYAL3) from Homo sapiens (Human).